Here is a 380-residue protein sequence, read N- to C-terminus: Cytochrome b (380 aa).

4 helical membrane-spanning segments follow: residues Phe-33–Met-53, Trp-77–Val-98, Trp-113–Leu-133, and Phe-178–Leu-198. Positions 83 and 97 each coordinate heme b. The heme b site is built by His-182 and His-196. Residue His-201 coordinates a ubiquinone. Transmembrane regions (helical) follow at residues Thr-226–Ala-246, Leu-288–Tyr-308, Leu-320–Ala-340, and Phe-347–Pro-367.

This sequence belongs to the cytochrome b family. In terms of assembly, the cytochrome bc1 complex contains 11 subunits: 3 respiratory subunits (MT-CYB, CYC1 and UQCRFS1), 2 core proteins (UQCRC1 and UQCRC2) and 6 low-molecular weight proteins (UQCRH/QCR6, UQCRB/QCR7, UQCRQ/QCR8, UQCR10/QCR9, UQCR11/QCR10 and a cleavage product of UQCRFS1). This cytochrome bc1 complex then forms a dimer. Heme b serves as cofactor.

It is found in the mitochondrion inner membrane. Component of the ubiquinol-cytochrome c reductase complex (complex III or cytochrome b-c1 complex) that is part of the mitochondrial respiratory chain. The b-c1 complex mediates electron transfer from ubiquinol to cytochrome c. Contributes to the generation of a proton gradient across the mitochondrial membrane that is then used for ATP synthesis. In Cricetomys emini (Emin's giant pouched rat), this protein is Cytochrome b (MT-CYB).